The following is a 229-amino-acid chain: Small ribosomal subunit protein uS2c (229 aa).

Belongs to the universal ribosomal protein uS2 family.

The protein localises to the plastid. It is found in the chloroplast. The polypeptide is Small ribosomal subunit protein uS2c (rps2) (Trieres chinensis (Marine centric diatom)).